A 1631-amino-acid chain; its full sequence is ABC transporter A family member 6 (1631 aa).

Transmembrane regions (helical) follow at residues 25–45 (ICCEIVFPIVIIGVLFAILAL), 242–262 (SVFITAALMMFSFRLVTDVVI), 285–305 (SWIITSLITSLPVTLLIVVIF), 317–337 (GIVIITFVLYLITLLLLSFIF), 346–366 (FCGLLSFVIVIAINICGIFVS), 372–392 (VSVKLLLSIFSPIAFSNSIYI), and 416–436 (ILMLGIDIIIYIILIWYFEKV). Positions 491–724 (ISIRNLRKEF…FGQGYLLTCN (234 aa)) constitute an ABC transporter 1 domain. ATP is bound at residue 527 to 534 (GPNGCGKS). Helical transmembrane passes span 866–886 (SFFLSIILPMALIIGSIILYK), 1047–1067 (AIIYFVFILMAGFSLMAGSFA), 1099–1119 (WDFFFAFIISILSCSILAGVI), 1127–1147 (FGSFLLCLILLSCAIIPLGYL), 1158–1178 (AVGAITAILFVFGLVFTIASL), 1198–1218 (IIDLIFSIISPIFALNRIVFI), and 1242–1262 (LGTPLIVLAGHAVLWNVWILL). The ABC transporter 2 domain occupies 1309 to 1544 (IQFKNLHKLF…FGAGYSIDVK (236 aa)). 1347–1354 (GLNGGGKS) lines the ATP pocket.

The protein belongs to the ABC transporter superfamily. ABCA family.

It localises to the membrane. The polypeptide is ABC transporter A family member 6 (abcA6) (Dictyostelium discoideum (Social amoeba)).